Here is a 419-residue protein sequence, read N- to C-terminus: Imidazolonepropionase (419 aa).

Histidine 82 and histidine 84 together coordinate Fe(3+). 2 residues coordinate Zn(2+): histidine 82 and histidine 84. Positions 91, 154, and 187 each coordinate 4-imidazolone-5-propanoate. Residue tyrosine 154 participates in N-formimidoyl-L-glutamate binding. Position 252 (histidine 252) interacts with Fe(3+). Position 252 (histidine 252) interacts with Zn(2+). Glutamate 255 is a binding site for 4-imidazolone-5-propanoate. Aspartate 326 provides a ligand contact to Fe(3+). Aspartate 326 contacts Zn(2+). N-formimidoyl-L-glutamate is bound by residues asparagine 328 and glycine 330. Residue serine 331 coordinates 4-imidazolone-5-propanoate.

It belongs to the metallo-dependent hydrolases superfamily. HutI family. Requires Zn(2+) as cofactor. Fe(3+) serves as cofactor.

It localises to the cytoplasm. It catalyses the reaction 4-imidazolone-5-propanoate + H2O = N-formimidoyl-L-glutamate. It functions in the pathway amino-acid degradation; L-histidine degradation into L-glutamate; N-formimidoyl-L-glutamate from L-histidine: step 3/3. In terms of biological role, catalyzes the hydrolytic cleavage of the carbon-nitrogen bond in imidazolone-5-propanoate to yield N-formimidoyl-L-glutamate. It is the third step in the universal histidine degradation pathway. In Clostridium tetani (strain Massachusetts / E88), this protein is Imidazolonepropionase.